A 199-amino-acid chain; its full sequence is Thymidine kinase (199 aa).

Residues 23-30 (GSMFSGKT) and 95-98 (DEAQ) each bind ATP. The Proton acceptor role is filled by Glu96. The Zn(2+) site is built by Cys152, Cys155, Cys184, and Cys187.

The protein belongs to the thymidine kinase family. Homotetramer.

It is found in the cytoplasm. The catalysed reaction is thymidine + ATP = dTMP + ADP + H(+). This Bacteroides fragilis (strain YCH46) protein is Thymidine kinase.